The sequence spans 380 residues: Glucose-1-phosphate adenylyltransferase (380 aa).

Residues tyrosine 99, glycine 164, glutamate 179–lysine 180, and serine 190 contribute to the alpha-D-glucose 1-phosphate site.

This sequence belongs to the bacterial/plant glucose-1-phosphate adenylyltransferase family. As to quaternary structure, homotetramer.

The enzyme catalyses alpha-D-glucose 1-phosphate + ATP + H(+) = ADP-alpha-D-glucose + diphosphate. The protein operates within glycan biosynthesis; glycogen biosynthesis. Its function is as follows. Involved in the biosynthesis of ADP-glucose, a building block required for the elongation reactions to produce glycogen. Catalyzes the reaction between ATP and alpha-D-glucose 1-phosphate (G1P) to produce pyrophosphate and ADP-Glc. This is Glucose-1-phosphate adenylyltransferase from Bacillus subtilis (strain 168).